The chain runs to 76 residues: Adipogenesis regulatory factor (76 aa).

As to expression, expressed in adipose tissue (at protein level). Highly expressed in omental and subcutaneous adipose tissues. Expressed in heart, cornea, liver, kidney and spleen.

The protein localises to the nucleus. In terms of biological role, plays a role in fat cell development; promotes adipogenic differentiation and stimulates transcription initiation of master adipogenesis factors like PPARG and CEBPA at early stages of preadipocyte differentiation. Its overexpression confers resistance to the anticancer chemotherapeutic drug cisplatin. This is Adipogenesis regulatory factor (ADIRF) from Homo sapiens (Human).